A 152-amino-acid polypeptide reads, in one-letter code: Aspartate carbamoyltransferase regulatory chain (152 aa).

Residues C108, C113, C137, and C140 each contribute to the Zn(2+) site.

Belongs to the PyrI family. As to quaternary structure, contains catalytic and regulatory chains. The cofactor is Zn(2+).

Involved in allosteric regulation of aspartate carbamoyltransferase. The protein is Aspartate carbamoyltransferase regulatory chain of Neisseria gonorrhoeae (strain ATCC 700825 / FA 1090).